Consider the following 515-residue polypeptide: Galactose/methyl galactoside import ATP-binding protein MglA (515 aa).

ABC transporter domains are found at residues 8–243 and 254–499; these read LEMR…VGRE and IPKE…AKYL. 40 to 47 provides a ligand contact to ATP; it reads GENGAGKS.

Belongs to the ABC transporter superfamily. Galactose/methyl galactoside importer (TC 3.A.1.2.3) family. As to quaternary structure, the complex is composed of one ATP-binding protein (MglA), two transmembrane proteins (MglC) and a solute-binding protein (MglB).

The protein resides in the cell membrane. The catalysed reaction is D-galactose(out) + ATP + H2O = D-galactose(in) + ADP + phosphate + H(+). It catalyses the reaction methyl beta-D-galactoside(out) + ATP + H2O = methyl beta-D-galactoside(in) + ADP + phosphate + H(+). Part of the ABC transporter complex MglABC involved in galactose/methyl galactoside import. Responsible for energy coupling to the transport system. The sequence is that of Galactose/methyl galactoside import ATP-binding protein MglA from Clostridium perfringens (strain 13 / Type A).